The following is a 291-amino-acid chain: Orotidine 5'-phosphate decarboxylase (291 aa).

The Proton donor role is filled by K97.

The protein belongs to the OMP decarboxylase family. Type 2 subfamily.

The catalysed reaction is orotidine 5'-phosphate + H(+) = UMP + CO2. Its pathway is pyrimidine metabolism; UMP biosynthesis via de novo pathway; UMP from orotate: step 2/2. The protein is Orotidine 5'-phosphate decarboxylase of Clostridium kluyveri (strain ATCC 8527 / DSM 555 / NBRC 12016 / NCIMB 10680 / K1).